We begin with the raw amino-acid sequence, 297 residues long: Protoheme IX farnesyltransferase (297 aa).

Helical transmembrane passes span 16–36 (VVALIVFTALVGMVLAIPGVP), 45–65 (VLGFLGIWLAASAAAAINQLL), 93–113 (VFASVLIVLSMVILVLWVNLI), 114–134 (TAVLTFASLIGYAVIYTVYLK), 141–161 (IVIGGLAGAMPPMLGWAAVTG), 172–192 (SLLVLIIFIWTPPHFWALAIF), 223–243 (VVLALVCLLPYLVGMSGAFYL), 244–264 (GGAIVLNAVFLWYAWRMLDPP), and 277–297 (IVYLMALFAFLLVDHWILPWL).

The protein belongs to the UbiA prenyltransferase family. Protoheme IX farnesyltransferase subfamily.

It is found in the cell inner membrane. The catalysed reaction is heme b + (2E,6E)-farnesyl diphosphate + H2O = Fe(II)-heme o + diphosphate. Its pathway is porphyrin-containing compound metabolism; heme O biosynthesis; heme O from protoheme: step 1/1. In terms of biological role, converts heme B (protoheme IX) to heme O by substitution of the vinyl group on carbon 2 of heme B porphyrin ring with a hydroxyethyl farnesyl side group. The protein is Protoheme IX farnesyltransferase of Stenotrophomonas maltophilia (strain R551-3).